We begin with the raw amino-acid sequence, 810 residues long: Glycerol-3-phosphate acyltransferase (810 aa).

The HXXXXD motif motif lies at 305–310 (CHRSHI).

It belongs to the GPAT/DAPAT family.

The protein resides in the cell inner membrane. It catalyses the reaction sn-glycerol 3-phosphate + an acyl-CoA = a 1-acyl-sn-glycero-3-phosphate + CoA. The protein operates within phospholipid metabolism; CDP-diacylglycerol biosynthesis; CDP-diacylglycerol from sn-glycerol 3-phosphate: step 1/3. This Haemophilus influenzae (strain PittEE) protein is Glycerol-3-phosphate acyltransferase.